A 65-amino-acid chain; its full sequence is Large ribosomal subunit protein bL35 (65 aa).

It belongs to the bacterial ribosomal protein bL35 family.

This is Large ribosomal subunit protein bL35 from Paraburkholderia phytofirmans (strain DSM 17436 / LMG 22146 / PsJN) (Burkholderia phytofirmans).